The chain runs to 349 residues: Probable myosin light chain kinase DDB_G0275057 (349 aa).

The disordered stretch occupies residues 1 to 33 (MGCFNSKEAGAGRPKTTTQQQQQATPEPTVTTA). Residues 16–33 (TTTQQQQQATPEPTVTTA) show a composition bias toward low complexity. The 258-residue stretch at 56-313 (YVVGKELGRG…AKQCLDDLWL (258 aa)) folds into the Protein kinase domain. Residues 62 to 70 (LGRGAFSVV) and lysine 85 contribute to the ATP site. Residue aspartate 178 is the Proton acceptor of the active site.

Belongs to the protein kinase superfamily. CAMK Ser/Thr protein kinase family. CaMK subfamily.

The enzyme catalyses L-seryl-[myosin light chain] + ATP = O-phospho-L-seryl-[myosin light chain] + ADP + H(+). It catalyses the reaction L-threonyl-[myosin light chain] + ATP = O-phospho-L-threonyl-[myosin light chain] + ADP + H(+). Does not have a calmodulin-binding domain. May phosphorylate a specific serine in the N-terminus of a myosin light chain. This is Probable myosin light chain kinase DDB_G0275057 from Dictyostelium discoideum (Social amoeba).